A 485-amino-acid chain; its full sequence is Cysteine--tRNA ligase (485 aa).

C28 is a binding site for Zn(2+). Positions 30-40 (MTVYDYCHLGH) match the 'HIGH' region motif. Residues C212, H237, and E241 each coordinate Zn(2+). The 'KMSKS' region motif lies at 269 to 273 (KMSKS). K272 is an ATP binding site.

The protein belongs to the class-I aminoacyl-tRNA synthetase family. Monomer. Zn(2+) serves as cofactor.

Its subcellular location is the cytoplasm. It catalyses the reaction tRNA(Cys) + L-cysteine + ATP = L-cysteinyl-tRNA(Cys) + AMP + diphosphate. This chain is Cysteine--tRNA ligase, found in Bordetella bronchiseptica (strain ATCC BAA-588 / NCTC 13252 / RB50) (Alcaligenes bronchisepticus).